Reading from the N-terminus, the 167-residue chain is UPF0598 protein CG30010 (167 aa).

It belongs to the UPF0598 family.

In Drosophila melanogaster (Fruit fly), this protein is UPF0598 protein CG30010.